A 169-amino-acid chain; its full sequence is MIELHAILAATANGCIGKDNALPWPPLKGDLARFKKLTMGKVVIMGRKTYESLPVKLEGRTCIVMTRQALELPGVRDANGAIFVNNVSDAMRFAQEESVGDVAYVIGGAEIFKRLALMITQIELTFVKRLYEGDTYVDLAEMVKDYEQNGMEEHDLHTYFTYRKKELTE.

A DHFR domain is found at 3-169; sequence ELHAILAATA…FTYRKKELTE (167 aa).

It belongs to the dihydrofolate reductase family. In terms of assembly, homodimer.

The catalysed reaction is (6S)-5,6,7,8-tetrahydrofolate + NADP(+) = 7,8-dihydrofolate + NADPH + H(+). Its pathway is cofactor biosynthesis; tetrahydrofolate biosynthesis; 5,6,7,8-tetrahydrofolate from 7,8-dihydrofolate: step 1/1. In terms of biological role, key enzyme in folate metabolism. Catalyzes an essential reaction for de novo glycine and purine synthesis, and for DNA precursor synthesis. The protein is Dihydrofolate reductase type 8 (dhfrVIII) of Escherichia coli.